The primary structure comprises 225 residues: NAD(P)H-quinone oxidoreductase subunit K, chloroplastic (225 aa).

Residues Cys-43, Cys-44, Cys-108, and Cys-139 each coordinate [4Fe-4S] cluster.

This sequence belongs to the complex I 20 kDa subunit family. In terms of assembly, NDH is composed of at least 16 different subunits, 5 of which are encoded in the nucleus. It depends on [4Fe-4S] cluster as a cofactor.

The protein localises to the plastid. It localises to the chloroplast thylakoid membrane. The enzyme catalyses a plastoquinone + NADH + (n+1) H(+)(in) = a plastoquinol + NAD(+) + n H(+)(out). The catalysed reaction is a plastoquinone + NADPH + (n+1) H(+)(in) = a plastoquinol + NADP(+) + n H(+)(out). NDH shuttles electrons from NAD(P)H:plastoquinone, via FMN and iron-sulfur (Fe-S) centers, to quinones in the photosynthetic chain and possibly in a chloroplast respiratory chain. The immediate electron acceptor for the enzyme in this species is believed to be plastoquinone. Couples the redox reaction to proton translocation, and thus conserves the redox energy in a proton gradient. In Capsella bursa-pastoris (Shepherd's purse), this protein is NAD(P)H-quinone oxidoreductase subunit K, chloroplastic.